Reading from the N-terminus, the 204-residue chain is Inner membrane protein BB_0250 (204 aa).

The next 5 membrane-spanning stretches (helical) occupy residues 17 to 37 (IAYS…NVPI), 58 to 78 (ILIF…SFYI), 101 to 121 (YYYG…PFGV), 139 to 159 (FIVS…TLSF), and 172 to 192 (IKII…IIYV).

Belongs to the DedA family.

Its subcellular location is the cell inner membrane. Functionally, required for proper cell division and envelope integrity. This is Inner membrane protein BB_0250 from Borreliella burgdorferi (strain ATCC 35210 / DSM 4680 / CIP 102532 / B31) (Borrelia burgdorferi).